Consider the following 156-residue polypeptide: Small ribosomal subunit protein uS7 (156 aa).

Belongs to the universal ribosomal protein uS7 family. In terms of assembly, part of the 30S ribosomal subunit. Contacts proteins S9 and S11.

Its function is as follows. One of the primary rRNA binding proteins, it binds directly to 16S rRNA where it nucleates assembly of the head domain of the 30S subunit. Is located at the subunit interface close to the decoding center, probably blocks exit of the E-site tRNA. In Jannaschia sp. (strain CCS1), this protein is Small ribosomal subunit protein uS7.